Here is an 88-residue protein sequence, read N- to C-terminus: FXYD domain-containing ion transport regulator 3 (88 aa).

An N-terminal signal peptide occupies residues 1–20; it reads MQEFALSLLVLLAGLPTLDA. The Extracellular portion of the chain corresponds to 21–38; that stretch reads NDPEDKDSPFYYDWHSLR. Residues 39–59 form a helical membrane-spanning segment; the sequence is VGGLICAGILCALGIIVLMSG. At 60 to 88 the chain is on the cytoplasmic side; sequence KCKCKFSQKPSHRPGDGPPLITPGSAHNC. The segment at 66–88 is disordered; it reads SQKPSHRPGDGPPLITPGSAHNC.

It belongs to the FXYD family. As to quaternary structure, regulatory subunit of the sodium/potassium-transporting ATPase which is composed of a catalytic alpha subunit, a non-catalytic beta subunit and an additional regulatory subunit. Interacts with catalytic alpha subunit ATP1A1. Also interacts with non-catalytic beta subunit ATP1B1. Interacts with the alpha1-beta1, alpha2-beta1 and alpha3-beta1 NKA isozymes. Post-translationally, glutathionylated.

It is found in the cell membrane. Its function is as follows. Associates with and regulates the activity of the sodium/potassium-transporting ATPase (NKA) which transports Na(+) out of the cell and K(+) into the cell. Reduces glutathionylation of the NKA beta-1 subunit ATP1B1, thus reversing glutathionylation-mediated inhibition of ATP1B1. Induces a hyperpolarization-activated chloride current when expressed in Xenopus oocytes. This Rattus norvegicus (Rat) protein is FXYD domain-containing ion transport regulator 3 (Fxyd3).